The chain runs to 260 residues: Methyl-coenzyme M reductase I subunit gamma (260 aa).

R123 provides a ligand contact to coenzyme M.

This sequence belongs to the methyl-coenzyme M reductase gamma subunit family. As to quaternary structure, MCR is a hexamer of two alpha, two beta, and two gamma chains, forming a dimer of heterotrimers. Requires coenzyme F430 as cofactor.

The protein resides in the cytoplasm. The enzyme catalyses coenzyme B + methyl-coenzyme M = methane + coenzyme M-coenzyme B heterodisulfide. It functions in the pathway one-carbon metabolism; methyl-coenzyme M reduction; methane from methyl-coenzyme M: step 1/1. In terms of biological role, component of the methyl-coenzyme M reductase (MCR) I that catalyzes the reductive cleavage of methyl-coenzyme M (CoM-S-CH3 or 2-(methylthio)ethanesulfonate) using coenzyme B (CoB or 7-mercaptoheptanoylthreonine phosphate) as reductant which results in the production of methane and the mixed heterodisulfide of CoB and CoM (CoM-S-S-CoB). This is the final step in methanogenesis. This is Methyl-coenzyme M reductase I subunit gamma (mcrG) from Methanocaldococcus jannaschii (strain ATCC 43067 / DSM 2661 / JAL-1 / JCM 10045 / NBRC 100440) (Methanococcus jannaschii).